The primary structure comprises 218 residues: Capsid protein (218 aa).

Methionine 1 is modified (N-acetylmethionine; by host). The disordered stretch occupies residues 1-30; that stretch reads MDKSGSPNASRTSRRRRPRRGSRSASGADA. The span at 12-22 shows a compositional bias: basic residues; sequence TSRRRRPRRGS.

Belongs to the cucumovirus capsid protein family.

The protein resides in the virion. Capsid protein. Probably binds RNA and plays a role in packaging. The sequence is that of Capsid protein from Cucumis sativus (Cucumber).